Consider the following 778-residue polypeptide: pH-response regulator protein palH/prr-4 (778 aa).

Topologically, residues 1-108 (MEPRQLFSDP…DPFYASTFPQ (108 aa)) are extracellular. Residues 109-129 (CYALAATTIIAYTLVIMLFIT) form a helical membrane-spanning segment. Residues 130-160 (PRSFLDGGVVVLGRKGFTNGGGGTSIGGRPW) lie on the Periplasmic side of the membrane. The chain crosses the membrane as a helical span at residues 161–181 (LQKVAALSVAISLTIANAATF). Residues 182-201 (RAAEQQYSWGVQNAKQLQED) lie on the Extracellular side of the membrane. The chain crosses the membrane as a helical span at residues 202 to 222 (VLGGAELKIIRIISDTFLWLA). Residues 223-237 (QAQTLIRLFPRQREK) lie on the Periplasmic side of the membrane. Residues 238–258 (VIIKWTAFALITLDVIFQSLN) form a helical membrane-spanning segment. The Extracellular segment spans residues 259-275 (SFKYGGSDLTRPKFTEA). Residues 276–296 (VPALSYLFALALGVLYAAWVL) traverse the membrane as a helical segment. Residues 297 to 314 (YYSIMKKRYAFYHPLMKN) lie on the Periplasmic side of the membrane. Residues 315 to 335 (MILVAVLSVVSILVPVVFFIL) traverse the membrane as a helical segment. Residues 336–341 (DISKPD) are Extracellular-facing. Residues 342 to 362 (FAGWGDYVRWVGAAAASVIVW) traverse the membrane as a helical segment. At 363–778 (EWVERIEALE…RSDSSTTPSP (416 aa)) the chain is on the periplasmic side. Disordered regions lie at residues 394–499 (ASQS…DTTS), 514–605 (ELTS…DENS), and 660–778 (ELNH…TPSP). Residues 446 to 456 (HRTEPSSRNEP) show a composition bias toward basic and acidic residues. Residues 457–466 (NEGSSPVAET) are compositionally biased toward polar residues. Composition is skewed to basic and acidic residues over residues 588–605 (FVTRSEPRSSKMQRDENS) and 661–675 (LNHSSREGTVREESR). Over residues 720 to 732 (PIVTQGSFTNNRY) the composition is skewed to polar residues. Low complexity predominate over residues 749–759 (ARAPSQPQSPS). The segment covering 769 to 778 (RSDSSTTPSP) has biased composition (polar residues).

The protein belongs to the palH/RIM21 family.

It localises to the cell membrane. In terms of biological role, required for the proteolytic cleavage of the transcription factor pacc-1 in response to alkaline ambient pH. This Neurospora crassa (strain ATCC 24698 / 74-OR23-1A / CBS 708.71 / DSM 1257 / FGSC 987) protein is pH-response regulator protein palH/prr-4 (prr-4).